Here is an 85-residue protein sequence, read N- to C-terminus: Small ribosomal subunit protein bS16c (85 aa).

The protein belongs to the bacterial ribosomal protein bS16 family.

It is found in the plastid. It localises to the chloroplast. The sequence is that of Small ribosomal subunit protein bS16c from Agrostis stolonifera (Creeping bentgrass).